The primary structure comprises 447 residues: ATP-dependent protease ATPase subunit HslU (447 aa).

Residues Ile-18, 60-65 (GVGKTE), Asp-259, Glu-325, and Arg-397 each bind ATP.

This sequence belongs to the ClpX chaperone family. HslU subfamily. In terms of assembly, a double ring-shaped homohexamer of HslV is capped on each side by a ring-shaped HslU homohexamer. The assembly of the HslU/HslV complex is dependent on binding of ATP.

Its subcellular location is the cytoplasm. In terms of biological role, ATPase subunit of a proteasome-like degradation complex; this subunit has chaperone activity. The binding of ATP and its subsequent hydrolysis by HslU are essential for unfolding of protein substrates subsequently hydrolyzed by HslV. HslU recognizes the N-terminal part of its protein substrates and unfolds these before they are guided to HslV for hydrolysis. This chain is ATP-dependent protease ATPase subunit HslU, found in Burkholderia ambifaria (strain ATCC BAA-244 / DSM 16087 / CCUG 44356 / LMG 19182 / AMMD) (Burkholderia cepacia (strain AMMD)).